A 20-amino-acid polypeptide reads, in one-letter code: Fibrinogen (20 aa).

The region spanning 1-20 (LHSNLEYQYRYSGRVASGIP) is the Vitellogenin domain.

Secreted into the hemolymph.

The protein localises to the secreted. It localises to the extracellular space. In terms of biological role, involved in lipid transport. Plays a role in hemolymph clotting. May be involved in wound healing in the cuticle. The chain is Fibrinogen from Pacifastacus leniusculus (Signal crayfish).